Reading from the N-terminus, the 362-residue chain is Peptide chain release factor 1 (362 aa).

Gln236 bears the N5-methylglutamine mark.

This sequence belongs to the prokaryotic/mitochondrial release factor family. Post-translationally, methylated by PrmC. Methylation increases the termination efficiency of RF1.

It is found in the cytoplasm. Peptide chain release factor 1 directs the termination of translation in response to the peptide chain termination codons UAG and UAA. The polypeptide is Peptide chain release factor 1 (Lactobacillus johnsonii (strain CNCM I-12250 / La1 / NCC 533)).